The sequence spans 122 residues: Small ribosomal subunit protein uS13 (122 aa).

The tract at residues 98 to 122 (VRGQRTHTNARTRKGPAKAIAGKKK) is disordered.

The protein belongs to the universal ribosomal protein uS13 family. Part of the 30S ribosomal subunit. Forms a loose heterodimer with protein S19. Forms two bridges to the 50S subunit in the 70S ribosome.

Functionally, located at the top of the head of the 30S subunit, it contacts several helices of the 16S rRNA. In the 70S ribosome it contacts the 23S rRNA (bridge B1a) and protein L5 of the 50S subunit (bridge B1b), connecting the 2 subunits; these bridges are implicated in subunit movement. Contacts the tRNAs in the A and P-sites. This is Small ribosomal subunit protein uS13 from Ruegeria pomeroyi (strain ATCC 700808 / DSM 15171 / DSS-3) (Silicibacter pomeroyi).